We begin with the raw amino-acid sequence, 584 residues long: 2-succinyl-5-enolpyruvyl-6-hydroxy-3-cyclohexene-1-carboxylate synthase (584 aa).

It belongs to the TPP enzyme family. MenD subfamily. As to quaternary structure, homodimer. Requires Mg(2+) as cofactor. The cofactor is Mn(2+). Thiamine diphosphate serves as cofactor.

It carries out the reaction isochorismate + 2-oxoglutarate + H(+) = 5-enolpyruvoyl-6-hydroxy-2-succinyl-cyclohex-3-ene-1-carboxylate + CO2. It functions in the pathway quinol/quinone metabolism; 1,4-dihydroxy-2-naphthoate biosynthesis; 1,4-dihydroxy-2-naphthoate from chorismate: step 2/7. Its pathway is quinol/quinone metabolism; menaquinone biosynthesis. Catalyzes the thiamine diphosphate-dependent decarboxylation of 2-oxoglutarate and the subsequent addition of the resulting succinic semialdehyde-thiamine pyrophosphate anion to isochorismate to yield 2-succinyl-5-enolpyruvyl-6-hydroxy-3-cyclohexene-1-carboxylate (SEPHCHC). The protein is 2-succinyl-5-enolpyruvyl-6-hydroxy-3-cyclohexene-1-carboxylate synthase of Bacillus cereus (strain ZK / E33L).